The sequence spans 548 residues: Folylpolyglutamate synthase (548 aa).

Residue 130–133 (GKGS) coordinates ATP. Mg(2+)-binding residues include S157, E234, and H262. Residues R382 and D396 each coordinate ATP.

The protein belongs to the folylpolyglutamate synthase family. The cofactor is a monovalent cation.

It is found in the mitochondrion inner membrane. The protein localises to the mitochondrion matrix. The protein resides in the cytoplasm. The catalysed reaction is (6S)-5,6,7,8-tetrahydrofolyl-(gamma-L-Glu)(n) + L-glutamate + ATP = (6S)-5,6,7,8-tetrahydrofolyl-(gamma-L-Glu)(n+1) + ADP + phosphate + H(+). The protein operates within cofactor biosynthesis; tetrahydrofolylpolyglutamate biosynthesis. Functionally, catalyzes conversion of folates to polyglutamate derivatives allowing concentration of folate compounds in the cell and the intracellular retention of these cofactors, which are important substrates for most of the folate-dependent enzymes that are involved in one-carbon transfer reactions involved in purine, pyrimidine and amino acid synthesis. Required for methionine synthesis and maintenance of intact mitochondrial DNA. Involved in telomere maintenance. The protein is Folylpolyglutamate synthase of Saccharomyces cerevisiae (strain RM11-1a) (Baker's yeast).